The primary structure comprises 157 residues: Methylamine utilization protein MauL (157 aa).

Its pathway is one-carbon metabolism; methylamine degradation. In terms of biological role, probably involved in TTQ prosthetic group biosynthesis. This is Methylamine utilization protein MauL (mauL) from Methylobacillus flagellatus (strain ATCC 51484 / DSM 6875 / VKM B-1610 / KT).